The following is a 257-amino-acid chain: Putative transcription factor R430 (257 aa).

Disordered stretches follow at residues 1-35 (MEKF…DNNS) and 58-77 (SLKS…PNKS). A compositionally biased stretch (low complexity) spans 7 to 25 (TDNTTDNTTDNTTDNTTDN). The segment covering 26–35 (TTDKLTDNNS) has biased composition (basic and acidic residues).

This sequence belongs to the nucleo-cytoplasmic large DNA viruses (NCLDVs) VLTF-3 family.

Its function is as follows. Putative transcription factor. This chain is Putative transcription factor R430, found in Acanthamoeba polyphaga (Amoeba).